The following is a 987-amino-acid chain: ATP-dependent 6-phosphofructokinase subunit alpha (987 aa).

Positions 1 to 580 (MQSQDSCYGV…LYENFLSTTV (580 aa)) are N-terminal catalytic PFK domain 1. Position 3 is a phosphoserine (S3). K89 participates in a covalent cross-link: Glycyl lysine isopeptide (Lys-Gly) (interchain with G-Cter in ubiquitin). S166, S179, S185, S189, and S192 each carry phosphoserine. G215 contacts ATP. At S217 the chain carries Phosphoserine. ATP-binding positions include 278–279 (RS) and 308–311 (GDGS). D309 contributes to the Mg(2+) binding site. Beta-D-fructose 6-phosphate contacts are provided by residues 354–356 (SID), R391, and 398–400 (MGR). The active-site Proton acceptor is the D356. A Phosphothreonine modification is found at T450. Beta-D-fructose 6-phosphate-binding positions include E455, K482, and 488–491 (HVQR). Residues 581–594 (KDDGSELLPVSDRL) are interdomain linker. Positions 595 to 987 (NIGIVHVGAP…EVAALAAENK (393 aa)) are C-terminal regulatory PFK domain 2. Residue K625 forms a Glycyl lysine isopeptide (Lys-Gly) (interchain with G-Cter in ubiquitin) linkage. Residues R665, 722–726 (TVSNN), R760, 767–769 (QGG), E827, R853, 859–862 (HVQQ), and R952 each bind beta-D-fructose 2,6-bisphosphate.

Belongs to the phosphofructokinase type A (PFKA) family. ATP-dependent PFK group I subfamily. Eukaryotic two domain clade 'E' sub-subfamily. In terms of assembly, heterooctamer of 4 alpha and 4 beta chains. Mg(2+) is required as a cofactor.

The protein localises to the cytoplasm. It is found in the mitochondrion outer membrane. The catalysed reaction is beta-D-fructose 6-phosphate + ATP = beta-D-fructose 1,6-bisphosphate + ADP + H(+). The protein operates within carbohydrate degradation; glycolysis; D-glyceraldehyde 3-phosphate and glycerone phosphate from D-glucose: step 3/4. Allosterically activated by ADP, AMP, or fructose 2,6-bisphosphate, and allosterically inhibited by ATP or citrate. Functionally, catalyzes the phosphorylation of D-fructose 6-phosphate to fructose 1,6-bisphosphate by ATP, the first committing step of glycolysis. This is ATP-dependent 6-phosphofructokinase subunit alpha (PFK1) from Saccharomyces cerevisiae (strain ATCC 204508 / S288c) (Baker's yeast).